A 118-amino-acid polypeptide reads, in one-letter code: UPF0449 protein C19orf25 homolog (118 aa).

Tyr-63 carries the post-translational modification Phosphotyrosine. Residues 69-105 (YVAMNQRLQQAGAQLEQKRADLQQAGEELERDISQVG) adopt a coiled-coil conformation.

It belongs to the UPF0449 family.

In Bos taurus (Bovine), this protein is UPF0449 protein C19orf25 homolog.